The chain runs to 425 residues: Sucrose-phosphatase 1 (425 aa).

The protein belongs to the sucrose phosphatase family. Homodimer. The cofactor is Mg(2+).

The enzyme catalyses sucrose 6(F)-phosphate + H2O = sucrose + phosphate. It functions in the pathway glycan biosynthesis; sucrose biosynthesis; sucrose from D-fructose 6-phosphate and UDP-alpha-D-glucose: step 2/2. Inhibited by EDTA. Its function is as follows. Catalyzes the final step of sucrose synthesis. The sequence is that of Sucrose-phosphatase 1 (SPP1) from Nicotiana tabacum (Common tobacco).